Reading from the N-terminus, the 291-residue chain is Ribosomal RNA small subunit methyltransferase A (291 aa).

Residues asparagine 33, valine 35, glycine 60, glutamate 81, aspartate 111, and asparagine 129 each coordinate S-adenosyl-L-methionine.

Belongs to the class I-like SAM-binding methyltransferase superfamily. rRNA adenine N(6)-methyltransferase family. RsmA subfamily.

The protein localises to the cytoplasm. It carries out the reaction adenosine(1518)/adenosine(1519) in 16S rRNA + 4 S-adenosyl-L-methionine = N(6)-dimethyladenosine(1518)/N(6)-dimethyladenosine(1519) in 16S rRNA + 4 S-adenosyl-L-homocysteine + 4 H(+). Its function is as follows. Specifically dimethylates two adjacent adenosines (A1518 and A1519) in the loop of a conserved hairpin near the 3'-end of 16S rRNA in the 30S particle. May play a critical role in biogenesis of 30S subunits. This is Ribosomal RNA small subunit methyltransferase A from Streptomyces griseus subsp. griseus (strain JCM 4626 / CBS 651.72 / NBRC 13350 / KCC S-0626 / ISP 5235).